Here is a 274-residue protein sequence, read N- to C-terminus: NH(3)-dependent NAD(+) synthetase (274 aa).

46–53 (GISGGQDS) contacts ATP. Position 52 (Asp-52) interacts with Mg(2+). Position 140 (Arg-140) interacts with deamido-NAD(+). Thr-160 contributes to the ATP binding site. Glu-165 is a Mg(2+) binding site. The deamido-NAD(+) site is built by Lys-173 and Asp-180. Residues Lys-189 and Thr-211 each coordinate ATP. 260–261 (HK) is a binding site for deamido-NAD(+).

The protein belongs to the NAD synthetase family. Homodimer.

It carries out the reaction deamido-NAD(+) + NH4(+) + ATP = AMP + diphosphate + NAD(+) + H(+). It functions in the pathway cofactor biosynthesis; NAD(+) biosynthesis; NAD(+) from deamido-NAD(+) (ammonia route): step 1/1. Catalyzes the ATP-dependent amidation of deamido-NAD to form NAD. Uses ammonia as a nitrogen source. The protein is NH(3)-dependent NAD(+) synthetase of Listeria innocua serovar 6a (strain ATCC BAA-680 / CLIP 11262).